A 520-amino-acid chain; its full sequence is ATP-dependent clpX-like chaperone, mitochondrial (520 aa).

The N-terminal 13 residues, 1–13, are a transit peptide targeting the mitochondrion; it reads MLKSASQNFFRAY. Residue 140-147 coordinates ATP; it reads GPSGSGKT.

The protein belongs to the ClpX chaperone family. As to quaternary structure, homohexamer that forms a ring structure; this hexamerization requires ATP binding. Interacts with HEM1.

The protein localises to the mitochondrion inner membrane. Its function is as follows. ATP-dependent unfoldase that stimulates the incorporation of the pyridoxal phosphate cofactor into 5-aminolevulinate synthase (HEM1), thereby activating 5-aminolevulinate (ALA) synthesis, the first step in heme biosynthesis. Up-regulates heme biosynthesis. This is ATP-dependent clpX-like chaperone, mitochondrial from Saccharomyces cerevisiae (strain ATCC 204508 / S288c) (Baker's yeast).